The chain runs to 337 residues: DNA-directed RNA polymerase subunit alpha (337 aa).

Residues 1–231 (MRNITTSAYT…KQLSVFDKIT (231 aa)) are alpha N-terminal domain (alpha-NTD). Positions 247-337 (ENTKLLQNIT…IAELKAQNEG (91 aa)) are alpha C-terminal domain (alpha-CTD).

This sequence belongs to the RNA polymerase alpha chain family. In terms of assembly, homodimer. The RNAP catalytic core consists of 2 alpha, 1 beta, 1 beta' and 1 omega subunit. When a sigma factor is associated with the core the holoenzyme is formed, which can initiate transcription.

The catalysed reaction is RNA(n) + a ribonucleoside 5'-triphosphate = RNA(n+1) + diphosphate. DNA-dependent RNA polymerase catalyzes the transcription of DNA into RNA using the four ribonucleoside triphosphates as substrates. In Campylobacter jejuni subsp. jejuni serotype O:2 (strain ATCC 700819 / NCTC 11168), this protein is DNA-directed RNA polymerase subunit alpha.